The following is a 127-amino-acid chain: UPF0102 protein NFA_41430 (127 aa).

This sequence belongs to the UPF0102 family.

This is UPF0102 protein NFA_41430 from Nocardia farcinica (strain IFM 10152).